We begin with the raw amino-acid sequence, 97 residues long: Putative regulatory protein Dole_1911 (97 aa).

The protein belongs to the RemA family.

This Desulfosudis oleivorans (strain DSM 6200 / JCM 39069 / Hxd3) (Desulfococcus oleovorans) protein is Putative regulatory protein Dole_1911.